The following is a 418-amino-acid chain: Putative F-box protein At3g23950 (418 aa).

One can recognise an F-box domain in the interval 1–42 (MNIPPELTFEVLVRLPLKSLARFRSMCKEWKLVIDSEFFRDC).

In Arabidopsis thaliana (Mouse-ear cress), this protein is Putative F-box protein At3g23950.